Consider the following 837-residue polypeptide: Zinc fingers and homeoboxes protein 2 (837 aa).

The interaction with EFNB1 stretch occupies residues 27 to 77 (VDRAKEKGIGTPQPDVAKDSWAAELENSSKENEVIEVKSMGESQSKKLQGG). T37 is modified (phosphothreonine). Residue K64 forms a Glycyl lysine isopeptide (Lys-Gly) (interchain with G-Cter in SUMO2) linkage. 2 consecutive C2H2-type zinc fingers follow at residues 78–101 (YECKYCPYSTQNLNEFTEHVDMQH) and 110–133 (YVCAECNFTTKKYDSLSDHNSKFH). The span at 164 to 180 (SITTSGPGTGDSDSGIS) shows a compositional bias: low complexity. Positions 164–204 (SITTSGPGTGDSDSGISVSKTPIMKPGKPKADAKKVPKKPE) are disordered. The span at 192 to 204 (PKADAKKVPKKPE) shows a compositional bias: basic and acidic residues. Residues 195–358 (DAKKVPKKPE…PAQLAPTKVT (164 aa)) are required for homodimerization. T207 is modified (phosphothreonine). DNA-binding regions (homeobox) lie at residues 263–324 (NTTK…WSPE), 439–501 (TPAS…IVHI), 530–591 (PQKF…EQAV), and 628–690 (SPSP…TVKW). Positions 263 to 446 (NTTKYNSALD…PLTPASDRKK (184 aa)) are required for repressor activity. The tract at residues 263–497 (NTTKYNSALD…SDHRYRCQRG (235 aa)) is required for interaction with NFYA. Residues 317 to 446 (HGISWSPEEV…PLTPASDRKK (130 aa)) are required for nuclear localization. The tract at residues 404-445 (GQKRPLVTPQAAPEPKRPHIAQVPEPPPKVANPPLTPASDRK) is disordered. Over residues 427–439 (PEPPPKVANPPLT) the composition is skewed to pro residues. K455 is covalently cross-linked (Glycyl lysine isopeptide (Lys-Gly) (interchain with G-Cter in SUMO2)). A disordered region spans residues 755 to 837 (PAKDCLPAKP…DCVPAEAGQA (83 aa)). Phosphoserine occurs at positions 825 and 827.

The protein belongs to the ZHX family. Homodimer (via homeobox domain). Heterodimer with ZHX1 (via homeobox domain 1). Heterodimer with ZHX3 (via homeobox domain 1). Heterodimerization with ZHX1 is not necessary for repressor activity. Interacts (via homeobox domain) with NFYA (via N-terminus). Interacts with EFNB1 intracellular domain peptide; the interaction enhances ZHX2 transcriptional repression activity. In terms of tissue distribution, ubiquitously expressed. Expressed in podocytes.

Its subcellular location is the nucleus. Functionally, acts as a transcriptional repressor. Represses the promoter activity of the CDC25C gene stimulated by NFYA. May play a role in retinal development where it regulates the composition of bipolar cell populations, by promoting differentiation of bipolar OFF-type cells. In the brain, may promote maintenance and suppress differentiation of neural progenitor cells in the developing cortex. The protein is Zinc fingers and homeoboxes protein 2 (ZHX2) of Homo sapiens (Human).